The primary structure comprises 252 residues: Chitooligosaccharide deacetylase (252 aa).

His61 and His125 together coordinate Mg(2+).

Belongs to the YdjC deacetylase family. ChbG subfamily. Homodimer. Requires Mg(2+) as cofactor.

The protein localises to the cytoplasm. The catalysed reaction is N,N'-diacetylchitobiose + H2O = N-acetyl-beta-D-glucosaminyl-(1-&gt;4)-D-glucosamine + acetate. The enzyme catalyses diacetylchitobiose-6'-phosphate + H2O = N'-monoacetylchitobiose-6'-phosphate + acetate. The protein operates within glycan degradation; chitin degradation. In terms of biological role, involved in the degradation of chitin. ChbG is essential for growth on the acetylated chitooligosaccharides chitobiose and chitotriose but is dispensable for growth on cellobiose and chitosan dimer, the deacetylated form of chitobiose. Deacetylation of chitobiose-6-P and chitotriose-6-P is necessary for both the activation of the chb promoter by the regulatory protein ChbR and the hydrolysis of phosphorylated beta-glucosides by the phospho-beta-glucosidase ChbF. Catalyzes the removal of only one acetyl group from chitobiose-6-P to yield monoacetylchitobiose-6-P, the inducer of ChbR and the substrate of ChbF. In Salmonella paratyphi B (strain ATCC BAA-1250 / SPB7), this protein is Chitooligosaccharide deacetylase.